Here is a 901-residue protein sequence, read N- to C-terminus: Protein translocase subunit SecA (901 aa).

ATP-binding positions include Gln-87, Gly-105–Thr-109, and Asp-512. Residues Cys-885, Cys-887, Cys-896, and His-897 each coordinate Zn(2+).

The protein belongs to the SecA family. As to quaternary structure, monomer and homodimer. Part of the essential Sec protein translocation apparatus which comprises SecA, SecYEG and auxiliary proteins SecDF-YajC and YidC. Requires Zn(2+) as cofactor.

Its subcellular location is the cell inner membrane. It is found in the cytoplasm. The catalysed reaction is ATP + H2O + cellular proteinSide 1 = ADP + phosphate + cellular proteinSide 2.. Part of the Sec protein translocase complex. Interacts with the SecYEG preprotein conducting channel. Has a central role in coupling the hydrolysis of ATP to the transfer of proteins into and across the cell membrane, serving both as a receptor for the preprotein-SecB complex and as an ATP-driven molecular motor driving the stepwise translocation of polypeptide chains across the membrane. This chain is Protein translocase subunit SecA, found in Salmonella paratyphi B (strain ATCC BAA-1250 / SPB7).